A 115-amino-acid polypeptide reads, in one-letter code: MLSCRFQCALVLLSLAVVFSKVSAAPSDLRLRQLLQRSLAAAAGKQELTKYSLAELLSELAQSENDALDSSDLSRGADQDEVRLELDRSANSSPLAARERKAGCKNFFWKTFTSC.

Positions 1-24 (MLSCRFQCALVLLSLAVVFSKVSA) are cleaved as a signal peptide. A propeptide spanning residues 25 to 88 (APSDLRLRQL…QDEVRLELDR (64 aa)) is cleaved from the precursor. A disordered region spans residues 65–95 (NDALDSSDLSRGADQDEVRLELDRSANSSPL). The span at 75–88 (RGADQDEVRLELDR) shows a compositional bias: basic and acidic residues. An intrachain disulfide couples Cys-104 to Cys-115.

The protein belongs to the somatostatin family.

The protein resides in the secreted. Its function is as follows. Somatostatin inhibits the release of somatotropin. The sequence is that of Somatostatin-1 (sst1) from Protopterus annectens (African lungfish).